The sequence spans 156 residues: MPRRPKYERRTIPPDPKYGSELLQRFINKVMKRGKKSLAERIVYSALDIVAQRTGQHPLEVFQRAIHNASPLLEVKPRRVGGATYQVPVQVEPHRRVSLAMRWLIQSARNRSGYKFVDKLAAEIIDAANNTGATIKKRDDTHRMAEANRAFAHYRW.

Belongs to the universal ribosomal protein uS7 family. In terms of assembly, part of the 30S ribosomal subunit. Contacts proteins S9 and S11.

In terms of biological role, one of the primary rRNA binding proteins, it binds directly to 16S rRNA where it nucleates assembly of the head domain of the 30S subunit. Is located at the subunit interface close to the decoding center, probably blocks exit of the E-site tRNA. In Thermomicrobium roseum (strain ATCC 27502 / DSM 5159 / P-2), this protein is Small ribosomal subunit protein uS7.